A 903-amino-acid polypeptide reads, in one-letter code: DNA mismatch repair protein MutS (903 aa).

The interval M1–Q89 is disordered. Composition is skewed to low complexity over residues A20–E36 and A49–A62. An ATP-binding site is contributed by G719 to S726.

This sequence belongs to the DNA mismatch repair MutS family.

This protein is involved in the repair of mismatches in DNA. It is possible that it carries out the mismatch recognition step. This protein has a weak ATPase activity. The sequence is that of DNA mismatch repair protein MutS from Synechococcus sp. (strain CC9605).